The following is a 392-amino-acid chain: NAC domain-containing protein 58 (392 aa).

The NAC domain maps to 9-173 (LPPGFRFHPT…DWVLCRIYKK (165 aa)). The tract at residues 317-345 (STSAGAVVEPPAVTGKRKRSSDGGEPTIQ) is disordered.

As to expression, expressed in leaves, nodes, internodes and mature seeds. Highly expressed in roots. Expressed in leaf sheaths, flag leaves and inflorescences. Expressed in primary and lateral roots, particularly in the vascular tissues. Expressed in the primary phloem of the culm and leaf sheaths. Expressed principally in the primary phloem and in the peripheral zone of the leaf vascular bundles. Expressed in the floral tissues.

It localises to the nucleus. Transcription factor that acts as a positive regulator of the jasmonate (JA) pathway to mediate leaf senescence. May directly regulate LOX2, AOC, AOS2, AOC1 and OPR7, which are genes involved in the biosynthesis of JA. Regulates positively leaf senescence by directly targeting senescence-associated genes (SAGs) related to chlorophyll degradation, nutrient transport and other genes associated with abscisic acid-induced leaf senescence. Transcription activator that plays a role in mediating abiotic stress responses through the abscisic acid (ABA) pathway. Possesses transcriptional activator activity in yeast. This Oryza sativa subsp. japonica (Rice) protein is NAC domain-containing protein 58.